The following is a 310-amino-acid chain: Aspartate carbamoyltransferase catalytic subunit (310 aa).

2 residues coordinate carbamoyl phosphate: Arg-58 and Thr-59. Lys-87 lines the L-aspartate pocket. 3 residues coordinate carbamoyl phosphate: Arg-108, His-136, and Gln-139. L-aspartate is bound by residues Arg-169 and Arg-229. Leu-268 and Pro-269 together coordinate carbamoyl phosphate.

Belongs to the aspartate/ornithine carbamoyltransferase superfamily. ATCase family. In terms of assembly, heterododecamer (2C3:3R2) of six catalytic PyrB chains organized as two trimers (C3), and six regulatory PyrI chains organized as three dimers (R2).

It carries out the reaction carbamoyl phosphate + L-aspartate = N-carbamoyl-L-aspartate + phosphate + H(+). The protein operates within pyrimidine metabolism; UMP biosynthesis via de novo pathway; (S)-dihydroorotate from bicarbonate: step 2/3. Functionally, catalyzes the condensation of carbamoyl phosphate and aspartate to form carbamoyl aspartate and inorganic phosphate, the committed step in the de novo pyrimidine nucleotide biosynthesis pathway. This chain is Aspartate carbamoyltransferase catalytic subunit, found in Leptospira biflexa serovar Patoc (strain Patoc 1 / Ames).